The following is a 122-amino-acid chain: MKLFIILGALCTMMSVGTGAFGAHGLEGKLSDKYMSVWEKAVNYQMYHGLGLIIIGVISGTTSINVNWAGWLLFLGVVFFSGSLYILALTQIRILGAITPIGGLLFIAGWLMLIISTFKFVG.

4 helical membrane-spanning segments follow: residues 3–23 (LFII…AFGA), 46–66 (MYHG…SINV), 69–89 (AGWL…ILAL), and 98–118 (ITPI…ISTF).

The protein belongs to the UPF0382 family.

Its subcellular location is the cell membrane. The chain is UPF0382 membrane protein SH2409 from Staphylococcus haemolyticus (strain JCSC1435).